The sequence spans 514 residues: Putative GTP-binding protein 6 (514 aa).

Residues 48 to 71 (WAGGGPVRGGGEEDPREDEEEEED) form a disordered region. A compositionally biased stretch (acidic residues) spans 59–71 (EEDPREDEEEEED). The region spanning 285–449 (PVVSVVGYTN…ALEASVLRAT (165 aa)) is the Hflx-type G domain. Mg(2+) is bound by residues Thr-298 and Thr-319.

It belongs to the TRAFAC class OBG-HflX-like GTPase superfamily. HflX GTPase family. The cofactor is Mg(2+).

This chain is Putative GTP-binding protein 6 (Gtpbp6), found in Mus musculus (Mouse).